Reading from the N-terminus, the 270-residue chain is Phosphatidylglycerol--prolipoprotein diacylglyceryl transferase (270 aa).

Helical transmembrane passes span 17–37 (LAIH…MFLG), 63–83 (ILFL…CLFY), and 95–115 (IFYI…VIAS). Arg-146 contacts a 1,2-diacyl-sn-glycero-3-phospho-(1'-sn-glycerol). A run of 3 helical transmembrane segments spans residues 182–202 (SQVY…WLYA), 209–229 (GEVA…AEYF), and 243–263 (MSMG…LWVW).

This sequence belongs to the Lgt family.

It is found in the cell inner membrane. It carries out the reaction L-cysteinyl-[prolipoprotein] + a 1,2-diacyl-sn-glycero-3-phospho-(1'-sn-glycerol) = an S-1,2-diacyl-sn-glyceryl-L-cysteinyl-[prolipoprotein] + sn-glycerol 1-phosphate + H(+). It functions in the pathway protein modification; lipoprotein biosynthesis (diacylglyceryl transfer). Functionally, catalyzes the transfer of the diacylglyceryl group from phosphatidylglycerol to the sulfhydryl group of the N-terminal cysteine of a prolipoprotein, the first step in the formation of mature lipoproteins. This Paracidovorax citrulli (strain AAC00-1) (Acidovorax citrulli) protein is Phosphatidylglycerol--prolipoprotein diacylglyceryl transferase.